A 145-amino-acid chain; its full sequence is UPF0179 protein MmarC7_0952 (145 aa).

The protein belongs to the UPF0179 family.

The protein is UPF0179 protein MmarC7_0952 of Methanococcus maripaludis (strain C7 / ATCC BAA-1331).